Reading from the N-terminus, the 418-residue chain is Tryptophan synthase beta chain 1 (418 aa).

N6-(pyridoxal phosphate)lysine is present on Lys99.

Belongs to the TrpB family. In terms of assembly, tetramer of two alpha and two beta chains. Pyridoxal 5'-phosphate is required as a cofactor.

It carries out the reaction (1S,2R)-1-C-(indol-3-yl)glycerol 3-phosphate + L-serine = D-glyceraldehyde 3-phosphate + L-tryptophan + H2O. It functions in the pathway amino-acid biosynthesis; L-tryptophan biosynthesis; L-tryptophan from chorismate: step 5/5. Its function is as follows. The beta subunit is responsible for the synthesis of L-tryptophan from indole and L-serine. This chain is Tryptophan synthase beta chain 1 (trpB1), found in Corynebacterium efficiens (strain DSM 44549 / YS-314 / AJ 12310 / JCM 11189 / NBRC 100395).